Consider the following 78-residue polypeptide: Large ribosomal subunit protein bL28 (78 aa).

Belongs to the bacterial ribosomal protein bL28 family.

The polypeptide is Large ribosomal subunit protein bL28 (Psychrobacter arcticus (strain DSM 17307 / VKM B-2377 / 273-4)).